A 230-amino-acid polypeptide reads, in one-letter code: Prolactin-6A1 (230 aa).

A signal peptide spans 1–29; sequence MLSLSQPCFSGTLLMLLASNFLLWKNVAP. The N-linked (GlcNAc...) asparagine glycan is linked to Asn57. 2 cysteine pairs are disulfide-bonded: Cys89/Cys205 and Cys222/Cys230.

Belongs to the somatotropin/prolactin family. Expressed in both placenta and decidual tissues. Detected first in deciduals cells early in gestation and in trophoblasts later in pregnancy.

The protein localises to the secreted. This Mus musculus (Mouse) protein is Prolactin-6A1 (Prl6a1).